Reading from the N-terminus, the 147-residue chain is NADH-quinone oxidoreductase subunit A (147 aa).

The next 3 membrane-spanning stretches (helical) occupy residues 16–36 (FAIFLIVAIGLCCLMLVGGWF), 68–88 (FYLVAMFFVIFDVEALYLFAW), and 97–117 (WVGFVEAAIFIFVLLAGLVYL).

It belongs to the complex I subunit 3 family. NDH-1 is composed of 13 different subunits. Subunits NuoA, H, J, K, L, M, N constitute the membrane sector of the complex.

It is found in the cell inner membrane. It catalyses the reaction a quinone + NADH + 5 H(+)(in) = a quinol + NAD(+) + 4 H(+)(out). Functionally, NDH-1 shuttles electrons from NADH, via FMN and iron-sulfur (Fe-S) centers, to quinones in the respiratory chain. The immediate electron acceptor for the enzyme in this species is believed to be ubiquinone. Couples the redox reaction to proton translocation (for every two electrons transferred, four hydrogen ions are translocated across the cytoplasmic membrane), and thus conserves the redox energy in a proton gradient. The polypeptide is NADH-quinone oxidoreductase subunit A (Salmonella paratyphi A (strain ATCC 9150 / SARB42)).